Reading from the N-terminus, the 188-residue chain is Ribosome-recycling factor (188 aa).

It belongs to the RRF family.

It localises to the cytoplasm. Responsible for the release of ribosomes from messenger RNA at the termination of protein biosynthesis. May increase the efficiency of translation by recycling ribosomes from one round of translation to another. This Akkermansia muciniphila (strain ATCC BAA-835 / DSM 22959 / JCM 33894 / BCRC 81048 / CCUG 64013 / CIP 107961 / Muc) protein is Ribosome-recycling factor.